Consider the following 427-residue polypeptide: Histidinol dehydrogenase (427 aa).

NAD(+)-binding residues include Tyr-127, Gln-187, and Asn-210. Substrate-binding residues include Ser-233, Gln-255, and His-258. 2 residues coordinate Zn(2+): Gln-255 and His-258. Residues Glu-323 and His-324 each act as proton acceptor in the active site. Residues His-324, Asp-357, Glu-411, and His-416 each contribute to the substrate site. Residue Asp-357 coordinates Zn(2+). Zn(2+) is bound at residue His-416.

The protein belongs to the histidinol dehydrogenase family. Zn(2+) serves as cofactor.

The catalysed reaction is L-histidinol + 2 NAD(+) + H2O = L-histidine + 2 NADH + 3 H(+). The protein operates within amino-acid biosynthesis; L-histidine biosynthesis; L-histidine from 5-phospho-alpha-D-ribose 1-diphosphate: step 9/9. Functionally, catalyzes the sequential NAD-dependent oxidations of L-histidinol to L-histidinaldehyde and then to L-histidine. The protein is Histidinol dehydrogenase of Streptococcus mutans serotype c (strain ATCC 700610 / UA159).